A 500-amino-acid polypeptide reads, in one-letter code: Aspartyl/glutamyl-tRNA(Asn/Gln) amidotransferase subunit B (500 aa).

This sequence belongs to the GatB/GatE family. GatB subfamily. In terms of assembly, heterotrimer of A, B and C subunits.

The enzyme catalyses L-glutamyl-tRNA(Gln) + L-glutamine + ATP + H2O = L-glutaminyl-tRNA(Gln) + L-glutamate + ADP + phosphate + H(+). It catalyses the reaction L-aspartyl-tRNA(Asn) + L-glutamine + ATP + H2O = L-asparaginyl-tRNA(Asn) + L-glutamate + ADP + phosphate + 2 H(+). Its function is as follows. Allows the formation of correctly charged Asn-tRNA(Asn) or Gln-tRNA(Gln) through the transamidation of misacylated Asp-tRNA(Asn) or Glu-tRNA(Gln) in organisms which lack either or both of asparaginyl-tRNA or glutaminyl-tRNA synthetases. The reaction takes place in the presence of glutamine and ATP through an activated phospho-Asp-tRNA(Asn) or phospho-Glu-tRNA(Gln). This is Aspartyl/glutamyl-tRNA(Asn/Gln) amidotransferase subunit B from Clavibacter sepedonicus (Clavibacter michiganensis subsp. sepedonicus).